The following is a 123-amino-acid chain: Defensin beta 118 (123 aa).

The signal sequence occupies residues 1-19; sequence MKLLLLALPMLVLLPQVIP. Intrachain disulfides connect C27-C54, C34-C48, and C38-C55. Disordered regions lie at residues 59 to 79 and 102 to 123; these read NEDH…STPG and MVEE…HHSS. Residues 64–123 constitute a propeptide that is removed on maturation; sequence QVPTTSPTPLSDSTPGSIDDILTVRFTTDYFEVSSKKDMVEESEAGWGTQTSLPDVHHSS. Residues 66-79 are compositionally biased toward low complexity; that stretch reads PTTSPTPLSDSTPG.

This sequence belongs to the beta-defensin family. The three-dimensional structure formed by the three intramolecular disulfide bridges is indispensable for antimicrobial activity.

It localises to the secreted. Host defense peptide that exhibits antimicrobial activity against both Gram-negative bacteria, such as E.coli and S.typhimurium, and Gram-positive bacteria, such as S.aureus and B.subtilis. Inhibits cell adhesion of E.coli on intestinal epithelial enterocytes. Causes rapid permeabilization of both the outer and inner membrane of E.coli, leading to morphological alterations on the bacterial surface. Binds to bacterial lipopolysaccharides (LPS) with high affinity, and may thereby be involved in immunoregulation through LPS neutralization. May contribute to epididymal innate immunity and protect the sperm against attack by microorganisms. This Hylobates lar (Lar gibbon) protein is Defensin beta 118 (DEFB118).